Reading from the N-terminus, the 188-residue chain is Biogenesis of lysosome-related organelles complex 1 subunit 5 (188 aa).

Residues 1–24 are disordered; it reads MSSSSSSSSPVKSTGSPFIQSLKP. Residues 10–19 show a composition bias toward polar residues; that stretch reads PVKSTGSPFI. Residues 101-183 adopt a coiled-coil conformation; it reads MQDQLASVLK…QYVTMDKELS (83 aa).

The protein belongs to the BLOC1S5 family. In terms of assembly, component of the biogenesis of lysosome-related organelles complex 1 (BLOC-1).

Functionally, component of the BLOC-1 complex, a complex that is required for normal biogenesis of lysosome-related organelles (LRO), such as platelet dense granules and melanosomes. Plays a role in intracellular vesicle trafficking. This chain is Biogenesis of lysosome-related organelles complex 1 subunit 5 (bloc1s5), found in Xenopus laevis (African clawed frog).